The following is a 486-amino-acid chain: NADH-quinone oxidoreductase subunit N (486 aa).

Helical transmembrane passes span 8 to 28, 38 to 58, 73 to 93, 105 to 125, 128 to 148, 169 to 189, 196 to 216, 235 to 255, 269 to 289, 304 to 324, 325 to 345, 373 to 393, 405 to 427, and 454 to 474; these read FIAL…MLAV, ATLS…VLGV, ACFY…LAHA, LYLL…AQHL, LFIG…YAFF, FLLF…FAGL, HVLS…GLGF, PAPV…AVLL, LLNI…NLLA, IAHL…AVEA, VGVY…VITL, AVMT…GFIG, HLWW…YLRV, and IMLV…QPLL.

The protein belongs to the complex I subunit 2 family. NDH-1 is composed of 13 different subunits. Subunits NuoA, H, J, K, L, M, N constitute the membrane sector of the complex.

Its subcellular location is the cell inner membrane. The enzyme catalyses a quinone + NADH + 5 H(+)(in) = a quinol + NAD(+) + 4 H(+)(out). Functionally, NDH-1 shuttles electrons from NADH, via FMN and iron-sulfur (Fe-S) centers, to quinones in the respiratory chain. The immediate electron acceptor for the enzyme in this species is believed to be ubiquinone. Couples the redox reaction to proton translocation (for every two electrons transferred, four hydrogen ions are translocated across the cytoplasmic membrane), and thus conserves the redox energy in a proton gradient. This is NADH-quinone oxidoreductase subunit N from Pseudomonas aeruginosa (strain ATCC 15692 / DSM 22644 / CIP 104116 / JCM 14847 / LMG 12228 / 1C / PRS 101 / PAO1).